A 168-amino-acid chain; its full sequence is Nicotinamide-nucleotide adenylyltransferase (168 aa).

Belongs to the archaeal NMN adenylyltransferase family.

Its subcellular location is the cytoplasm. The enzyme catalyses beta-nicotinamide D-ribonucleotide + ATP + H(+) = diphosphate + NAD(+). It functions in the pathway cofactor biosynthesis; NAD(+) biosynthesis; NAD(+) from nicotinamide D-ribonucleotide: step 1/1. This is Nicotinamide-nucleotide adenylyltransferase from Methanocorpusculum labreanum (strain ATCC 43576 / DSM 4855 / Z).